A 277-amino-acid polypeptide reads, in one-letter code: Phosphoenolpyruvate synthase regulatory protein (277 aa).

157–164 (GVSRCGKT) lines the ADP pocket.

Belongs to the pyruvate, phosphate/water dikinase regulatory protein family. PSRP subfamily.

The enzyme catalyses [pyruvate, water dikinase] + ADP = [pyruvate, water dikinase]-phosphate + AMP + H(+). The catalysed reaction is [pyruvate, water dikinase]-phosphate + phosphate + H(+) = [pyruvate, water dikinase] + diphosphate. Functionally, bifunctional serine/threonine kinase and phosphorylase involved in the regulation of the phosphoenolpyruvate synthase (PEPS) by catalyzing its phosphorylation/dephosphorylation. In Shigella boydii serotype 4 (strain Sb227), this protein is Phosphoenolpyruvate synthase regulatory protein.